A 492-amino-acid chain; its full sequence is Aspartyl/glutamyl-tRNA(Asn/Gln) amidotransferase subunit B (492 aa).

Belongs to the GatB/GatE family. GatB subfamily. Heterotrimer of A, B and C subunits.

It catalyses the reaction L-glutamyl-tRNA(Gln) + L-glutamine + ATP + H2O = L-glutaminyl-tRNA(Gln) + L-glutamate + ADP + phosphate + H(+). The enzyme catalyses L-aspartyl-tRNA(Asn) + L-glutamine + ATP + H2O = L-asparaginyl-tRNA(Asn) + L-glutamate + ADP + phosphate + 2 H(+). In terms of biological role, allows the formation of correctly charged Asn-tRNA(Asn) or Gln-tRNA(Gln) through the transamidation of misacylated Asp-tRNA(Asn) or Glu-tRNA(Gln) in organisms which lack either or both of asparaginyl-tRNA or glutaminyl-tRNA synthetases. The reaction takes place in the presence of glutamine and ATP through an activated phospho-Asp-tRNA(Asn) or phospho-Glu-tRNA(Gln). This Dehalococcoides mccartyi (strain ATCC BAA-2266 / KCTC 15142 / 195) (Dehalococcoides ethenogenes (strain 195)) protein is Aspartyl/glutamyl-tRNA(Asn/Gln) amidotransferase subunit B.